A 1453-amino-acid polypeptide reads, in one-letter code: Scavenger receptor cysteine-rich type 1 protein M160 (1453 aa).

A signal peptide spans 1-40 (MMLPQNSWHIDFGRCCCHQNLFSAVVTCILLLNSCFLISS). Residues 41–1359 (FNGTDLELRL…LKSLNASSGH (1319 aa)) lie on the Extracellular side of the membrane. N42, N78, N120, and N161 each carry an N-linked (GlcNAc...) asparagine glycan. SRCR domains lie at 48–148 (LRLV…VNCY), 155–255 (LRLV…LTCY), 262–362 (LRLV…VICS), 369–469 (LRLA…VICS), 476–576 (LRLV…VTCS), 583–683 (LRLV…VICS), 690–790 (LRLV…LICS), 795–895 (PRLV…VVCS), and 900–1000 (VRLV…VICT). 3 disulfides stabilise this stretch: C73–C137, C86–C147, and C117–C127. Intrachain disulfides connect C180–C244, C193–C254, C224–C234, C287–C351, C300–C361, and C331–C341. 5 N-linked (GlcNAc...) asparagine glycosylation sites follow: N334, N377, N441, N548, and N637. 18 cysteine pairs are disulfide-bonded: C394–C458, C407–C468, C438–C448, C501–C565, C514–C575, C545–C555, C608–C672, C621–C682, C652–C662, C715–C779, C728–C789, C759–C769, C820–C884, C833–C894, C864–C874, C925–C989, C938–C999, and C969–C979. N-linked (GlcNAc...) asparagine glycosylation is found at N972, N1013, N1084, and N1104. 3 SRCR domains span residues 1036 to 1136 (LRLV…VICS), 1141 to 1243 (LRLY…ITCE), and 1246 to 1346 (IRVR…VRCS). Intrachain disulfides connect C1061–C1125, C1074–C1135, and C1105–C1115. N1161 and N1171 each carry an N-linked (GlcNAc...) asparagine glycan. 5 disulfides stabilise this stretch: C1181–C1242, C1212–C1222, C1271–C1335, C1284–C1345, and C1315–C1325. N1318 and N1354 each carry an N-linked (GlcNAc...) asparagine glycan. Residues 1360–1380 (LALILSSIFGLLLLVLFILFL) traverse the membrane as a helical segment. The Cytoplasmic portion of the chain corresponds to 1381–1453 (TWCRVQKQKH…GVLPASEATK (73 aa)). Residues 1418–1435 (EDPHGTRTSDDTPNHGCE) are compositionally biased toward basic and acidic residues. Residues 1418 to 1453 (EDPHGTRTSDDTPNHGCEDASDTSLLGVLPASEATK) form a disordered region.

In terms of tissue distribution, isoform 1 is highly expressed in the spleen, lymph nodes, thymus, and fetal liver and weakly expressed in bone marrow and no expression was found in peripheral blood leukocytes. Isoform 1 expression is restricted to the monocyte and macrophage cell lines. Isoform 2 is only expressed in spleen.

It is found in the cell membrane. It localises to the secreted. The polypeptide is Scavenger receptor cysteine-rich type 1 protein M160 (CD163L1) (Homo sapiens (Human)).